Here is a 176-residue protein sequence, read N- to C-terminus: Large ribosomal subunit protein uL6 (176 aa).

A compositionally biased stretch (basic and acidic residues) spans 151–170 (RPPEPYKGKGVRYADEQVRR). The disordered stretch occupies residues 151-176 (RPPEPYKGKGVRYADEQVRRKEAKKK).

It belongs to the universal ribosomal protein uL6 family. As to quaternary structure, part of the 50S ribosomal subunit.

In terms of biological role, this protein binds to the 23S rRNA, and is important in its secondary structure. It is located near the subunit interface in the base of the L7/L12 stalk, and near the tRNA binding site of the peptidyltransferase center. The polypeptide is Large ribosomal subunit protein uL6 (Shewanella pealeana (strain ATCC 700345 / ANG-SQ1)).